The primary structure comprises 694 residues: Katanin p80 WD40 repeat-containing subunit B1 (694 aa).

6 WD repeats span residues 18 to 58 (AHSS…CIMS), 61 to 100 (GHTSAVGCIQFNSSEERVVAGSLSGSLRLWDLEAAKILRT), 103 to 142 (GHKASISSLDFHPMGEYLASGSVDSNIKLWDVRRKGCVFR), 145 to 186 (GHTQ…TEFT), 188 to 226 (HTSAVNVVQFHPNEYLLASGSADRTVKLWDLEKFNMIGS), and 229 to 269 (GETG…DVVH). Disordered regions lie at residues 319 to 410 (KPIP…PFPA) and 470 to 492 (TTSASSPSRPVVNTTKPKPSTGI). Over residues 327–349 (ALGTTLRRNYERPTTSCTGQEMK) the composition is skewed to polar residues. Over residues 350–378 (QSSEADRRSPEGERRSPSSEDEKEDKESS) the composition is skewed to basic and acidic residues. The segment covering 470-481 (TTSASSPSRPVV) has biased composition (low complexity). Polar residues predominate over residues 482–492 (NTTKPKPSTGI).

The protein belongs to the WD repeat KATNB1 family. In terms of assembly, interacts with katna1. This interaction enhances the microtubule binding and severing activity of katna1 and also targets this activity to the centrosome.

Its subcellular location is the cytoplasm. The protein localises to the cytoskeleton. The protein resides in the microtubule organizing center. It localises to the centrosome. It is found in the spindle pole. Its subcellular location is the spindle. In terms of biological role, participates in a complex which severs microtubules in an ATP-dependent manner. May act to target the enzymatic subunit of this complex to sites of action such as the centrosome. Microtubule severing may promote rapid reorganization of cellular microtubule arrays and the release of microtubules from the centrosome following nucleation. The sequence is that of Katanin p80 WD40 repeat-containing subunit B1 (katnb1) from Danio rerio (Zebrafish).